The chain runs to 159 residues: Insertion element IS136 uncharacterized 16.9 kDa protein (159 aa).

Over residues 126-142 (RSFVSPSSSTPSTARSS) the composition is skewed to low complexity. The tract at residues 126-159 (RSFVSPSSSTPSTARSSPGRPLPMQAFPAQTCAT) is disordered.

This is Insertion element IS136 uncharacterized 16.9 kDa protein from Agrobacterium tumefaciens (strain T37).